The following is a 512-amino-acid chain: Podocan-like protein 1 (512 aa).

The first 26 residues, 1–26 (MAESGLAMWPSLLLLLLLPGPPPVAG), serve as a signal peptide directing secretion. An LRRNT domain is found at 37-74 (ESLQPLPRACPLRCSCPRVDTVDCDGLDLRVFPDNITR). Asparagine 71 carries N-linked (GlcNAc...) asparagine glycosylation. 17 LRR repeats span residues 75 to 96 (AAQHLSLQNNQLQELPYNELSR), 99 to 119 (GLRTLNLHNNLISSEGLPDEA), 125 to 146 (QLQHLCVAHNKLSVAPQFLPRS), 147 to 167 (LRVADLAANQVMEIFPLTFGE), 170 to 193 (ALRSVYLHNNQLSNAGLPPDAFRG), 196 to 216 (AIATLSLSNNQLSYLPPSLPP), 217 to 238 (SLERLHLQNNLISKVPRGALSR), 241 to 261 (QLRELYLQHNQLTDSGLDATT), 267 to 288 (SLEYLDLSHNQLTTVPAGLPRT), 289 to 309 (LAILHLGRNRIRQVEAARLHG), 312 to 332 (GLRYLLLQHNQLGSSGLPAGA), 338 to 359 (GLHTLHLYGNGLDRVPPALPRR), 360 to 380 (LRALVLPHNHVAALGARDLVA), 383 to 396 (GLTELNLAYNRLAS), 409 to 430 (ALRSLDLAGNQLTRLPMGLPTG), 431 to 451 (LRTLQLQRNQLRMLEPEPLAG), and 454 to 474 (QLRELSLAHNRLRVGDIGPGT).

It belongs to the small leucine-rich proteoglycan (SLRP) family. SLRP class V subfamily. N-glycosylated.

It is found in the secreted. The protein resides in the extracellular space. It localises to the extracellular matrix. In Homo sapiens (Human), this protein is Podocan-like protein 1 (PODNL1).